The primary structure comprises 205 residues: Golgi apparatus membrane protein TVP23 homolog B (205 aa).

N-acetylmethionine is present on M1. A compositionally biased stretch (acidic residues) spans 1–21 (MLSQDSNDDTEDVSLFDAEEE). Residues 1-27 (MLSQDSNDDTEDVSLFDAEEETTNRPR) are disordered. A run of 4 helical transmembrane segments spans residues 34–53 (PVAS…VYLL), 54–72 (CELL…ILLL), 126–146 (IFWL…FSAL), and 152–172 (KWLA…YGYI).

It belongs to the TVP23 family.

The protein localises to the membrane. The chain is Golgi apparatus membrane protein TVP23 homolog B (Tvp23b) from Mus musculus (Mouse).